The following is a 459-amino-acid chain: Phosphomethylpyrimidine synthase (459 aa).

Residues Asn81, Met110, Tyr140, His176, Ser196–Gly198, Asp237–Arg240, and Glu276 each bind substrate. Position 280 (His280) interacts with Zn(2+). Substrate is bound at residue Tyr303. A Zn(2+)-binding site is contributed by His344. Cys424, Cys427, and Cys432 together coordinate [4Fe-4S] cluster.

This sequence belongs to the ThiC family. [4Fe-4S] cluster is required as a cofactor.

It carries out the reaction 5-amino-1-(5-phospho-beta-D-ribosyl)imidazole + S-adenosyl-L-methionine = 4-amino-2-methyl-5-(phosphooxymethyl)pyrimidine + CO + 5'-deoxyadenosine + formate + L-methionine + 3 H(+). It participates in cofactor biosynthesis; thiamine diphosphate biosynthesis. Functionally, catalyzes the synthesis of the hydroxymethylpyrimidine phosphate (HMP-P) moiety of thiamine from aminoimidazole ribotide (AIR) in a radical S-adenosyl-L-methionine (SAM)-dependent reaction. The sequence is that of Phosphomethylpyrimidine synthase from Gloeobacter violaceus (strain ATCC 29082 / PCC 7421).